Here is a 258-residue protein sequence, read N- to C-terminus: UBX domain-containing protein 2A (258 aa).

Residues 1-14 (MKEVDNLDSIKEEW) are compositionally biased toward basic and acidic residues. Residues 1–30 (MKEVDNLDSIKEEWACETGPPDSQPLNDNQ) form a disordered region. The tract at residues 1–152 (MKEVDNLDSI…SATPRIVSKA (152 aa)) is required for interaction with CHRNA3. A required for inhibition of CHRNA3 ubiquitination and translocation of CHRNA3 to the plasma membrane resulting in an increase in acetylcholine-gated nicotinic acetylcholine receptor currents region spans residues 1–165 (MKEVDNLDSI…EVDNKSTLSA (165 aa)). The SEP domain maps to 61 to 125 (QVDVNIKLWK…VEDKKNEVCM (65 aa)). The segment at 168 to 258 (LNNLEPITRI…QKTAEPFRKL (91 aa)) is required for interaction with VCP. A UBX domain is found at 170–247 (NLEPITRIQI…DLKNAVIIQR (78 aa)).

In terms of assembly, part of a complex composed of STUB1/CHIP, VCP/p97, CHRNA3, and UBXN2A that modulates the ubiquitination and endoplasmic reticulum-associated degradation (ERAD) of CHRNA3. Within the complex UBXN2A acts as a scaffold protein required for the interaction of CHRNA3 with VCP/p97, this interaction also inhibits CHRNA3 ubiquitination by STUB1/CHIP and subsequently ERAD. Interacts (via SEP domain) with CHRNA3 and interacts (via UBX domain) with VCP/P97; these interactions are required for the interaction of CHRNA3 with the STUB1-VCP-UBXN2A complex. Interacts with HSPA9/MOT-2 (via SBD domain); the interaction inhibits HSPA9/MOT-2 interaction with and degradation of p53, thereby promotes p53 translocation to the nucleus. Interacts with RICTOR. Post-translationally, ubiquitinated. As to expression, expressed in the prefrontal cortex (at protein level). Expressed in the habenula and hippocampus (at protein level). Expressed in peripheral ganglia.

Its subcellular location is the golgi apparatus. The protein resides in the endoplasmic reticulum. It is found in the perikaryon. It localises to the cell projection. The protein localises to the dendrite. Its subcellular location is the nucleus. The protein resides in the cytoplasm. Acts to repress the ubiquitination and subsequent endoplasmic reticulum-associated degradation of CHRNA3 by the STUB1-VCP-UBXN2A complex in cortical neurons. Also acts to promote the translocation of CHRNA3 to the plasma membrane and subsequently increases plasma membrane acetylcholine-gated ion-channel activation. Plays a role in the inhibition of STUB1-mediated TP53 degradation, via its interaction with HSPA9 which acts to inhibit TP53 binding to HSPA9. Positively mediates the ubiquitination and proteosomal degradation of RICTOR, may thereby act as a negative regulator of the mTORC2 pathway. The polypeptide is UBX domain-containing protein 2A (Mus musculus (Mouse)).